A 612-amino-acid chain; its full sequence is Zinc metalloproteinase-disintegrin-like 8 (612 aa).

The N-terminal stretch at 1-20 (MIQVLLVTICLAVFPYQGSS) is a signal peptide. Positions 21-189 (IILGSGNVND…KKASQLNLTP (169 aa)) are excised as a propeptide. In terms of domain architecture, Peptidase M12B spans 199–395 (KYIELVIVAD…NRPPCILNKP (197 aa)). Residue E202 coordinates Ca(2+). N218 carries N-linked (GlcNAc...) asparagine glycosylation. Residue D286 participates in Ca(2+) binding. Cystine bridges form between C310-C390, C350-C374, and C352-C357. H335 is a binding site for Zn(2+). E336 is a catalytic residue. Zn(2+) contacts are provided by H339 and H345. Ca(2+)-binding residues include C390, N393, V405, N408, F410, E412, E415, and D418. The Disintegrin domain maps to 403 to 489 (PPVCGNYFVE…DCPTDDFQRN (87 aa)). 14 disulfides stabilise this stretch: C406-C435, C417-C430, C419-C425, C429-C452, C443-C449, C448-C474, C461-C481, C468-C500, C493-C505, C512-C562, C527-C573, C540-C550, C557-C599, and C593-C605. The D/ECD-tripeptide motif lies at 467–469 (ECD). N502 is a glycosylation site (N-linked (GlcNAc...) asparagine).

The protein belongs to the venom metalloproteinase (M12B) family. P-III subfamily. The cofactor is Zn(2+). In terms of tissue distribution, expressed by the venom gland.

It is found in the secreted. In terms of biological role, snake venom metalloproteinase that impairs hemostasis in the envenomed animal. In Crotalus adamanteus (Eastern diamondback rattlesnake), this protein is Zinc metalloproteinase-disintegrin-like 8.